The primary structure comprises 240 residues: MSTLFIADLHLSVQEPAITAGFLHFIQREAIHADALYILGDLFESWIGDDDPEPLYRQIAAALKSLQQHGVPCYFIHGNRDFLLGKRFAVESGMTLLPEEKVVDLYGRKIVILHGDTLCTDDADYQHFRRRVHNPIIQKLFLWLPLRFRLRIAAYMRNQSQQNNSGKSQLIMDVNPHAVVETFERNSVSWMIHGHTHRPAVHTVELASTTAHRVVLGAWHVEGSMVKVTADKVELIKFPF.

Residues aspartate 8, histidine 10, aspartate 41, asparagine 79, and histidine 114 each coordinate Mn(2+). 79–80 (NR) provides a ligand contact to substrate. Substrate contacts are provided by aspartate 122, serine 160, asparagine 164, lysine 167, and histidine 195. Mn(2+) is bound by residues histidine 195 and histidine 197.

Belongs to the LpxH family. Mn(2+) serves as cofactor.

Its subcellular location is the cell inner membrane. The catalysed reaction is UDP-2-N,3-O-bis[(3R)-3-hydroxytetradecanoyl]-alpha-D-glucosamine + H2O = 2-N,3-O-bis[(3R)-3-hydroxytetradecanoyl]-alpha-D-glucosaminyl 1-phosphate + UMP + 2 H(+). Its pathway is glycolipid biosynthesis; lipid IV(A) biosynthesis; lipid IV(A) from (3R)-3-hydroxytetradecanoyl-[acyl-carrier-protein] and UDP-N-acetyl-alpha-D-glucosamine: step 4/6. In terms of biological role, hydrolyzes the pyrophosphate bond of UDP-2,3-diacylglucosamine to yield 2,3-diacylglucosamine 1-phosphate (lipid X) and UMP by catalyzing the attack of water at the alpha-P atom. Involved in the biosynthesis of lipid A, a phosphorylated glycolipid that anchors the lipopolysaccharide to the outer membrane of the cell. The polypeptide is UDP-2,3-diacylglucosamine hydrolase (Yersinia enterocolitica serotype O:8 / biotype 1B (strain NCTC 13174 / 8081)).